Here is a 614-residue protein sequence, read N- to C-terminus: DNA mismatch repair protein MutL (614 aa).

The disordered stretch occupies residues 355 to 411 (PLSTGRVSEADPSNYATQSKFDEKPRESGSQGQSSSISAPSSYSRGGEYSARSQPEL). The span at 382-401 (SGSQGQSSSISAPSSYSRGG) shows a compositional bias: low complexity.

It belongs to the DNA mismatch repair MutL/HexB family.

In terms of biological role, this protein is involved in the repair of mismatches in DNA. It is required for dam-dependent methyl-directed DNA mismatch repair. May act as a 'molecular matchmaker', a protein that promotes the formation of a stable complex between two or more DNA-binding proteins in an ATP-dependent manner without itself being part of a final effector complex. The polypeptide is DNA mismatch repair protein MutL (Shewanella woodyi (strain ATCC 51908 / MS32)).